We begin with the raw amino-acid sequence, 319 residues long: Cytochrome f (319 aa).

Residues 1–35 form the signal peptide; it reads MQNKDACKSLSSWVSLSISLLVLTVPLIWPYNSTA. Heme contacts are provided by Phe-36, Cys-56, Cys-59, and His-60. Residues 285–305 traverse the membrane as a helical segment; sequence IQGLLVFFASVILAQIFLVLK.

The protein belongs to the cytochrome f family. In terms of assembly, the 4 large subunits of the cytochrome b6-f complex are cytochrome b6, subunit IV (17 kDa polypeptide, petD), cytochrome f and the Rieske protein, while the 4 small subunits are PetG, PetL, PetM and PetN. The complex functions as a dimer. Heme serves as cofactor.

The protein localises to the plastid. The protein resides in the chloroplast thylakoid membrane. Functionally, component of the cytochrome b6-f complex, which mediates electron transfer between photosystem II (PSII) and photosystem I (PSI), cyclic electron flow around PSI, and state transitions. In Staurastrum punctulatum (Green alga), this protein is Cytochrome f.